Reading from the N-terminus, the 465-residue chain is Trigger factor (465 aa).

Residues 163 to 248 (GDVINFNFKG…INKIKENQPA (86 aa)) form the PPIase FKBP-type domain. The disordered stretch occupies residues 431–465 (EIVNKNQNDNEIEQDKEQKDNNEEKIKQENNLENK). A compositionally biased stretch (basic and acidic residues) spans 443 to 465 (EQDKEQKDNNEEKIKQENNLENK).

This sequence belongs to the FKBP-type PPIase family. Tig subfamily.

The protein resides in the cytoplasm. It catalyses the reaction [protein]-peptidylproline (omega=180) = [protein]-peptidylproline (omega=0). Involved in protein export. Acts as a chaperone by maintaining the newly synthesized protein in an open conformation. Functions as a peptidyl-prolyl cis-trans isomerase. This is Trigger factor from Mesomycoplasma hyopneumoniae (strain J / ATCC 25934 / NCTC 10110) (Mycoplasma hyopneumoniae).